Here is a 163-residue protein sequence, read N- to C-terminus: Ureidoglycolate lyase 2 (163 aa).

Belongs to the ureidoglycolate lyase family. As to quaternary structure, homodimer. Ni(2+) serves as cofactor.

The catalysed reaction is (S)-ureidoglycolate = urea + glyoxylate. Its pathway is nitrogen metabolism; (S)-allantoin degradation. Its function is as follows. Catalyzes the catabolism of the allantoin degradation intermediate (S)-ureidoglycolate, generating urea and glyoxylate. Involved in the utilization of allantoin as nitrogen source. This is Ureidoglycolate lyase 2 from Rhizobium meliloti (strain 1021) (Ensifer meliloti).